The sequence spans 285 residues: Probable endonuclease 4 (285 aa).

Residues His69, His109, Glu145, Asp179, His182, His216, Asp229, His231, and Glu261 each coordinate Zn(2+).

This sequence belongs to the AP endonuclease 2 family. The cofactor is Zn(2+).

It carries out the reaction Endonucleolytic cleavage to 5'-phosphooligonucleotide end-products.. Its function is as follows. Endonuclease IV plays a role in DNA repair. It cleaves phosphodiester bonds at apurinic or apyrimidinic (AP) sites, generating a 3'-hydroxyl group and a 5'-terminal sugar phosphate. The protein is Probable endonuclease 4 of Enterobacter sp. (strain 638).